The following is a 197-amino-acid chain: GTP cyclohydrolase-2 (197 aa).

Arginine 50–glutamate 54 contacts GTP. 3 residues coordinate Zn(2+): cysteine 55, cysteine 66, and cysteine 68. Residues glutamine 71, glutamate 93–arginine 95, and threonine 115 each bind GTP. Aspartate 127 functions as the Proton acceptor in the catalytic mechanism. Arginine 129 functions as the Nucleophile in the catalytic mechanism. 2 residues coordinate GTP: threonine 150 and lysine 155.

Belongs to the GTP cyclohydrolase II family. Zn(2+) is required as a cofactor.

It carries out the reaction GTP + 4 H2O = 2,5-diamino-6-hydroxy-4-(5-phosphoribosylamino)-pyrimidine + formate + 2 phosphate + 3 H(+). The protein operates within cofactor biosynthesis; riboflavin biosynthesis; 5-amino-6-(D-ribitylamino)uracil from GTP: step 1/4. In terms of biological role, catalyzes the conversion of GTP to 2,5-diamino-6-ribosylamino-4(3H)-pyrimidinone 5'-phosphate (DARP), formate and pyrophosphate. This chain is GTP cyclohydrolase-2, found in Neisseria meningitidis serogroup C (strain 053442).